The sequence spans 219 residues: Probable transcriptional regulator flp (219 aa).

The region spanning 144–212 is the HTH crp-type domain; the sequence is DSINVRLTHY…GKQVRILNAE (69 aa). Residues 191-210 constitute a DNA-binding region (H-T-H motif); that stretch reads KRLAEEKLIERSGKQVRILN.

In Lacticaseibacillus casei (Lactobacillus casei), this protein is Probable transcriptional regulator flp (flp).